The primary structure comprises 1230 residues: Cullin-associated NEDD8-dissociated protein 1 (1230 aa).

A2 is modified (N-acetylalanine). 12 HEAT repeats span residues 2 to 39 (ASAS…KDSI), 44 to 81 (DSER…KVKE), 83 to 119 (QVET…ELPP), 131 to 165 (CKKI…LSRQ), 171 to 208 (NFHP…SCGN), 210 to 247 (VFVD…QAGH), 248 to 282 (RIGE…FESF), 289 to 366 (EVYP…TRHE), 370 to 407 (EFYK…QTRP), 424 to 467 (PLTM…VLPG), 471 to 510 (QHIP…NHSP), and 515 to 552 (PHVQ…VIRP). Residues 315-344 (DEDEDENAMDADGGDDDDQGSDDEYSDDDD) form a disordered region. S335 carries the post-translational modification Phosphoserine. S558 bears the Phosphoserine mark. HEAT repeat units lie at residues 563 to 602 (PYIK…NLGD), 606 to 643 (PDLS…LKID), 646 to 683 (PVLG…NYSD), 688 to 725 (AMID…VYPS), 729 to 768 (KISG…TGTN), 770 to 808 (LGYM…ALTR), 809 to 845 (ACPK…LGEV), 852 to 889 (SGQL…GNLP), 890 to 927 (EYLP…GLKP), 928 to 960 (YVEN…KLTL), 961 to 998 (IDPE…DHPQ), 1002 to 1039 (PLLK…NKPS), 1043 to 1097 (DLLD…DSCL), 1099 to 1133 (RLDI…LSTL), and 1140 to 1189 (QRLD…IPEA). K971 is modified (N6-acetyllysine).

This sequence belongs to the CAND family. Interacts with TBP. Part of a complex that contains CUL1 and RBX1. Interacts with unneddylated cullins: interacts with CUL1, CUL2, CUL3, CUL4A, CUL4B and CUL5. Does not bind neddylated CUL1. Interaction with cullins is abolished in presence of COMMD1, which antagonizes with CAND1 for interacting with cullins. Interacts with ERCC6. Interacts with DCUN1D1, DCUN1D2, DCUN1D3, DCUN1D4 and DCUN1D5; these interactions are bridged by cullins and strongly inhibits the neddylation of cullins.

It localises to the cytoplasm. It is found in the nucleus. Key assembly factor of SCF (SKP1-CUL1-F-box protein) E3 ubiquitin ligase complexes that promotes the exchange of the substrate-recognition F-box subunit in SCF complexes, thereby playing a key role in the cellular repertoire of SCF complexes. Acts as a F-box protein exchange factor. The exchange activity of CAND1 is coupled with cycles of neddylation conjugation: in the deneddylated state, cullin-binding CAND1 binds CUL1-RBX1, increasing dissociation of the SCF complex and promoting exchange of the F-box protein. Probably plays a similar role in other cullin-RING E3 ubiquitin ligase complexes. This chain is Cullin-associated NEDD8-dissociated protein 1 (Cand1), found in Mus musculus (Mouse).